The sequence spans 645 residues: Serine/threonine-protein kinase BUR1 (645 aa).

A Protein kinase domain is found at 55-379 (YREEEKLGQG…AMKAKKHPFF (325 aa)). Residues 61–69 (LGQGTFGEV) and Lys-84 contribute to the ATP site. Asp-208 (proton acceptor) is an active-site residue. Disordered stretches follow at residues 407 to 428 (EMNE…STDN), 442 to 513 (ASIP…KYPA), and 533 to 645 (RYRN…ADYY). Polar residues-rich tracts occupy residues 409–428 (NESM…STDN) and 457–474 (IPAQ…TQNI). Over residues 477–486 (EPIPTAPLPK) the composition is skewed to pro residues. A compositionally biased stretch (polar residues) spans 578-598 (NRYQNQDYNTSRNTGYNQYSQ).

It belongs to the protein kinase superfamily. CMGC Ser/Thr protein kinase family. CDC2/CDKX subfamily.

The protein resides in the nucleus. It catalyses the reaction L-seryl-[protein] + ATP = O-phospho-L-seryl-[protein] + ADP + H(+). The enzyme catalyses L-threonyl-[protein] + ATP = O-phospho-L-threonyl-[protein] + ADP + H(+). It carries out the reaction [DNA-directed RNA polymerase] + ATP = phospho-[DNA-directed RNA polymerase] + ADP + H(+). Its function is as follows. Serine/threonine-protein kinase involved in transcription regulation. Phosphorylates the UBC2/RAD6 ubiquitin-conjugating enzyme (E2), leading to monoubiquitination of histone H2B and the silencing of telomeric-associated genes. Also required for histone H3 methylation. Necessary for the recovery from pheromone-induced growth arrest in the cell cycle G1 phase. The sequence is that of Serine/threonine-protein kinase BUR1 (BUR1) from Kluyveromyces lactis (strain ATCC 8585 / CBS 2359 / DSM 70799 / NBRC 1267 / NRRL Y-1140 / WM37) (Yeast).